A 355-amino-acid chain; its full sequence is Transcription factor TCP13 (355 aa).

A disordered region spans residues 1-57 (MNIVSWKDANDEVAGGATTRREREVKEDQEETEVRATSGKTVIKKQPTSISSSSSSW). In terms of domain architecture, TCP spans 74 to 132 (GKDRHSKVCTLRGLRDRRVRLSVPTAIQLYDLQERLGVDQPSKAVDWLLDAAKEEIDEL). The disordered stretch occupies residues 329 to 355 (TNSTTTANMSRHLGSERCTSRGSDHHM). Over residues 341–355 (LGSERCTSRGSDHHM) the composition is skewed to basic and acidic residues.

As to quaternary structure, interacts with AHL27 and AHL29. Interacts with SPL. Interacts with KIN10; KIN11 and FLZ3. As to expression, expressed in cotyledons, particularly in the vascular region, in leaves, buds, flowers and immature siliques, and, to a lower extent, in roots.

It localises to the nucleus. The protein resides in the plastid. The protein localises to the chloroplast. Plays a pivotal role in the control of morphogenesis of shoot organs by negatively regulating the expression of boundary-specific genes such as CUC genes, probably through the induction of miRNA (e.g. miR164). Binds to the 3'-ACC-5' repeats in the light-responsive promoter (LRP) of psbD, and activates its transcription. Participates in ovule development. This is Transcription factor TCP13 (TCP13) from Arabidopsis thaliana (Mouse-ear cress).